Reading from the N-terminus, the 382-residue chain is D-galactonate dehydratase (382 aa).

Residue aspartate 183 coordinates Mg(2+). Histidine 185 serves as the catalytic Proton donor. Mg(2+) contacts are provided by glutamate 209 and glutamate 235. Histidine 285 (proton acceptor) is an active-site residue.

This sequence belongs to the mandelate racemase/muconate lactonizing enzyme family. GalD subfamily. Requires Mg(2+) as cofactor.

It carries out the reaction D-galactonate = 2-dehydro-3-deoxy-D-galactonate + H2O. It participates in carbohydrate acid metabolism; D-galactonate degradation; D-glyceraldehyde 3-phosphate and pyruvate from D-galactonate: step 1/3. Its function is as follows. Catalyzes the dehydration of D-galactonate to 2-keto-3-deoxy-D-galactonate. This is D-galactonate dehydratase from Escherichia coli O9:H4 (strain HS).